A 124-amino-acid chain; its full sequence is Glycine cleavage system H protein (124 aa).

A Lipoyl-binding domain is found at 22–104 (LVITGITDHA…YGKGWIYKIK (83 aa)). Position 63 is an N6-lipoyllysine (Lys63).

Belongs to the GcvH family. In terms of assembly, the glycine cleavage system is composed of four proteins: P, T, L and H. It depends on (R)-lipoate as a cofactor.

Its function is as follows. The glycine cleavage system catalyzes the degradation of glycine. The H protein shuttles the methylamine group of glycine from the P protein to the T protein. This Acinetobacter baumannii (strain ACICU) protein is Glycine cleavage system H protein.